A 662-amino-acid polypeptide reads, in one-letter code: 72 kDa type IV collagenase (662 aa).

The signal sequence occupies residues 1-29 (MEARLVWGVLVGPLRVLCVLCCLLGHAIA). The propeptide at 30 to 109 (APSPIIKFPG…PRCGNPDVAN (80 aa)) is activation peptide. The Cysteine switch motif lies at 100–107 (PRCGNPDV). Zn(2+) is bound at residue cysteine 102. The collagenase-like 1 stretch occupies residues 110–221 (YNFFPRKPKW…LWTLGEGQVV (112 aa)). Ca(2+) is bound by residues aspartate 134 and aspartate 168. Zn(2+) is bound by residues histidine 178 and aspartate 180. The Ca(2+) site is built by aspartate 185 and glycine 186. Histidine 193 is a binding site for Zn(2+). The Ca(2+) site is built by glycine 200, glycine 202, and aspartate 204. Histidine 206 is a binding site for Zn(2+). Ca(2+) contacts are provided by aspartate 208, aspartate 209, and glutamate 211. Positions 222-396 (RVKYGNADGE…WGFCPDQGYS (175 aa)) are collagen-binding. Fibronectin type-II domains lie at 228–276 (ADGE…FCPH), 286–334 (GDGQ…FCPE), and 344–392 (SEGA…FCPD). 6 disulfide bridges follow: cysteine 233-cysteine 259, cysteine 247-cysteine 274, cysteine 291-cysteine 317, cysteine 305-cysteine 332, cysteine 349-cysteine 375, and cysteine 363-cysteine 390. Residues 397–467 (LFLVAAHEFG…GPTPTLGPVT (71 aa)) are collagenase-like 2. Histidine 403 is a Zn(2+) binding site. Residue glutamate 404 is part of the active site. Zn(2+) is bound by residues histidine 407 and histidine 413. The required for inhibitor TIMP2 binding stretch occupies residues 414-662 (SQDPGALMAP…GSIKSDWLGC (249 aa)). Cysteine 471 and cysteine 662 are joined by a disulfide. Hemopexin repeat units follow at residues 474-518 (DIVF…WPEL), 519-565 (PEKI…GLPP), 567-615 (VQQV…WNAI), and 616-662 (PDNL…WLGC). Ca(2+)-binding residues include aspartate 478, aspartate 523, and aspartate 571. Asparagine 575 carries N-linked (GlcNAc...) asparagine glycosylation. Aspartate 620 is a binding site for Ca(2+). Asparagine 644 is a glycosylation site (N-linked (GlcNAc...) asparagine).

This sequence belongs to the peptidase M10A family. As to quaternary structure, interacts (via the C-terminal hemopexin-like domains-containing region) with the integrin alpha-V/beta-3; the interaction promotes vascular invasion in angiogenic vessels and melamoma cells. Interacts (via the C-terminal PEX domain) with TIMP2 (via the C-terminal); the interaction inhibits the degradation activity. Interacts with GSK3B. Requires Ca(2+) as cofactor. It depends on Zn(2+) as a cofactor. In terms of processing, phosphorylation on multiple sites modulates enzymatic activity. Phosphorylated by PKC in vitro. The propeptide is processed by MMP14 (MT-MMP1) and MMP16 (MT-MMP3). Autocatalytic cleavage in the C-terminal produces the anti-angiogenic peptide, PEX. This processing appears to be facilitated by binding integrin integrinv/beta3.

It is found in the secreted. Its subcellular location is the extracellular space. The protein localises to the extracellular matrix. The protein resides in the membrane. It localises to the nucleus. It catalyses the reaction Cleavage of gelatin type I and collagen types IV, V, VII, X. Cleaves the collagen-like sequence Pro-Gln-Gly-|-Ile-Ala-Gly-Gln.. Ubiquitinous metalloproteinase that is involved in diverse functions such as remodeling of the vasculature, angiogenesis, tissue repair, tumor invasion, inflammation, and atherosclerotic plaque rupture. As well as degrading extracellular matrix proteins, can also act on several nonmatrix proteins such as big endothelial 1 and beta-type CGRP promoting vasoconstriction. Also cleaves KISS at a Gly-|-Leu bond. Appears to have a role in myocardial cell death pathways. Contributes to myocardial oxidative stress by regulating the activity of GSK3beta. Cleaves GSK3beta in vitro. Involved in the formation of the fibrovascular tissues. Its function is as follows. PEX, the C-terminal non-catalytic fragment of MMP2, possesses anti-angiogenic and anti-tumor properties and inhibits cell migration and cell adhesion to FGF2 and vitronectin. Ligand for integrin alpha-v/beta3 on the surface of blood vessels. This is 72 kDa type IV collagenase (Mmp2) from Rattus norvegicus (Rat).